Here is a 75-residue protein sequence, read N- to C-terminus: Conotoxin Vn5.6 (75 aa).

The N-terminal stretch at 1–19 is a signal peptide; the sequence is MLCLPVFIILLLLASPAAP. Residues 20 to 59 constitute a propeptide that is removed on maturation; the sequence is NPLEKRIQSDLIRAALEDADMKTGEREILNIIDSISDVAK. Q60 carries the post-translational modification Pyrrolidone carboxylic acid.

Belongs to the conotoxin T superfamily. Post-translationally, contains 2 disulfide bonds that can be either 'C1-C3, C2-C4' or 'C1-C4, C2-C3', since these disulfide connectivities have been observed for conotoxins with cysteine framework V (for examples, see AC P0DQQ7 and AC P81755). Expressed by the venom duct.

The protein resides in the secreted. The sequence is that of Conotoxin Vn5.6 from Conus ventricosus (Mediterranean cone).